Consider the following 338-residue polypeptide: Purple acid phosphatase 17 (338 aa).

Positions 1–31 are cleaved as a signal peptide; that stretch reads MNSGRRSLMSATASLSLLLCIFTTFVVVSNG. Aspartate 53 contributes to the Fe cation binding site. An N-linked (GlcNAc...) asparagine glycan is attached at asparagine 61. Residues aspartate 86 and tyrosine 89 each coordinate Fe cation. Aspartate 86 contacts Zn(2+). Residues asparagine 124 and histidine 218 each contribute to the Zn(2+) site. The Proton donor role is filled by histidine 227. Histidine 253 contacts Zn(2+). 253 to 255 contributes to the substrate binding site; sequence HDH. Residue histidine 255 coordinates Fe cation.

Belongs to the metallophosphoesterase superfamily. Purple acid phosphatase family. As to quaternary structure, homodimer. Fe cation is required as a cofactor. The cofactor is Zn(2+). In terms of tissue distribution, expressed in roots, stems, leaves, flowers and siliques.

It is found in the secreted. It catalyses the reaction a phosphate monoester + H2O = an alcohol + phosphate. It carries out the reaction 2 a phenolic donor + H2O2 = 2 a phenolic radical donor + 2 H2O. Its activity is regulated as follows. Inhibited by phosphate and molybdate. In terms of biological role, metallo-phosphoesterase involved in phosphate metabolism. Has a peroxidase activity. The polypeptide is Purple acid phosphatase 17 (PAP17) (Arabidopsis thaliana (Mouse-ear cress)).